Reading from the N-terminus, the 402-residue chain is Homoserine O-acetyltransferase (402 aa).

In terms of domain architecture, AB hydrolase-1 spans 38-359; sequence NAVLVCHALT…HGHDAFLVEP (322 aa). S146 functions as the Nucleophile in the catalytic mechanism. A substrate-binding site is contributed by R217. Active-site residues include D319 and H352. Position 353 (D353) interacts with substrate.

The protein belongs to the AB hydrolase superfamily. MetX family. Homodimer.

It localises to the cytoplasm. The catalysed reaction is L-homoserine + acetyl-CoA = O-acetyl-L-homoserine + CoA. The protein operates within amino-acid biosynthesis; L-methionine biosynthesis via de novo pathway; O-acetyl-L-homoserine from L-homoserine: step 1/1. In terms of biological role, transfers an acetyl group from acetyl-CoA to L-homoserine, forming acetyl-L-homoserine. This is Homoserine O-acetyltransferase from Haloarcula marismortui (strain ATCC 43049 / DSM 3752 / JCM 8966 / VKM B-1809) (Halobacterium marismortui).